Reading from the N-terminus, the 492-residue chain is Probable cytochrome P450 313a3 (492 aa).

Cysteine 438 is a binding site for heme.

Belongs to the cytochrome P450 family. Heme serves as cofactor.

Its subcellular location is the endoplasmic reticulum membrane. It is found in the microsome membrane. May be involved in the metabolism of insect hormones and in the breakdown of synthetic insecticides. The sequence is that of Probable cytochrome P450 313a3 (Cyp313a3) from Drosophila melanogaster (Fruit fly).